Here is a 286-residue protein sequence, read N- to C-terminus: Meiotically up-regulated gene 64 protein (286 aa).

The protein resides in the cytoplasm. Has a role in meiosis. In Schizosaccharomyces pombe (strain 972 / ATCC 24843) (Fission yeast), this protein is Meiotically up-regulated gene 64 protein (mug64).